Here is a 283-residue protein sequence, read N- to C-terminus: Protein/nucleic acid deglycase HchA (283 aa).

Positions 86, 91, and 123 each coordinate Zn(2+). The Nucleophile role is filled by C185.

This sequence belongs to the peptidase C56 family. HchA subfamily. As to quaternary structure, homodimer.

The protein localises to the cytoplasm. The catalysed reaction is N(omega)-(1-hydroxy-2-oxopropyl)-L-arginyl-[protein] + H2O = lactate + L-arginyl-[protein] + H(+). It catalyses the reaction N(6)-(1-hydroxy-2-oxopropyl)-L-lysyl-[protein] + H2O = lactate + L-lysyl-[protein] + H(+). It carries out the reaction S-(1-hydroxy-2-oxopropyl)-L-cysteinyl-[protein] + H2O = lactate + L-cysteinyl-[protein] + H(+). The enzyme catalyses N(omega)-(1-hydroxy-2-oxoethyl)-L-arginyl-[protein] + H2O = L-arginyl-[protein] + glycolate + H(+). The catalysed reaction is N(6)-(1-hydroxy-2-oxoethyl)-L-lysyl-[protein] + H2O = glycolate + L-lysyl-[protein] + H(+). It catalyses the reaction S-(1-hydroxy-2-oxoethyl)-L-cysteinyl-[protein] + H2O = glycolate + L-cysteinyl-[protein] + H(+). It carries out the reaction N(2)-(1-hydroxy-2-oxopropyl)-dGTP + H2O = lactate + dGTP + H(+). The enzyme catalyses N(2)-(1-hydroxy-2-oxopropyl)-GTP + H2O = lactate + GTP + H(+). The catalysed reaction is N(2)-(1-hydroxy-2-oxopropyl)-GDP + H2O = lactate + GDP + H(+). It catalyses the reaction N(2)-(1-hydroxy-2-oxopropyl)-GMP + H2O = lactate + GMP + H(+). It carries out the reaction N(2)-(1-hydroxy-2-oxoethyl)-dGTP + H2O = dGTP + glycolate + H(+). The enzyme catalyses N(2)-(1-hydroxy-2-oxoethyl)-GTP + H2O = glycolate + GTP + H(+). The catalysed reaction is N(2)-(1-hydroxy-2-oxoethyl)-GDP + H2O = glycolate + GDP + H(+). It catalyses the reaction N(2)-(1-hydroxy-2-oxoethyl)-GMP + H2O = glycolate + GMP + H(+). It carries out the reaction an N(2)-(1-hydroxy-2-oxopropyl)-guanosine in RNA + H2O = a guanosine in RNA + lactate + H(+). The enzyme catalyses an N(2)-(1-hydroxy-2-oxopropyl)-2'-deoxyguanosine in DNA + H2O = a 2'-deoxyguanosine in DNA + lactate + H(+). The catalysed reaction is an N(2)-(1-hydroxy-2-oxoethyl)-guanosine in RNA + H2O = a guanosine in RNA + glycolate + H(+). It catalyses the reaction an N(2)-(1-hydroxy-2-oxoethyl)-2'-deoxyguanosine in DNA + H2O = a 2'-deoxyguanosine in DNA + glycolate + H(+). Its function is as follows. Protein and nucleotide deglycase that catalyzes the deglycation of the Maillard adducts formed between amino groups of proteins or nucleotides and reactive carbonyl groups of glyoxals. Thus, functions as a protein deglycase that repairs methylglyoxal- and glyoxal-glycated proteins, and releases repaired proteins and lactate or glycolate, respectively. Deglycates cysteine, arginine and lysine residues in proteins, and thus reactivates these proteins by reversing glycation by glyoxals. Acts on early glycation intermediates (hemithioacetals and aminocarbinols), preventing the formation of Schiff bases and advanced glycation endproducts (AGE). Also functions as a nucleotide deglycase able to repair glycated guanine in the free nucleotide pool (GTP, GDP, GMP, dGTP) and in DNA and RNA. Is thus involved in a major nucleotide repair system named guanine glycation repair (GG repair), dedicated to reversing methylglyoxal and glyoxal damage via nucleotide sanitization and direct nucleic acid repair. Plays an important role in protecting cells from carbonyl stress. The polypeptide is Protein/nucleic acid deglycase HchA (Shigella flexneri).